The primary structure comprises 1065 residues: Carbamoyl phosphate synthase large chain (1065 aa).

The tract at residues 1–401 (MPKRRDIETI…SLLKAVRSLE (401 aa)) is carboxyphosphate synthetic domain. Positions 129, 169, 175, 176, 208, 210, 215, 241, 242, 243, 284, and 298 each coordinate ATP. In terms of domain architecture, ATP-grasp 1 spans 133 to 327 (RALMNELGEP…IAKLAAKIAV (195 aa)). Residues Gln284, Glu298, and Asn300 each coordinate Mg(2+). The Mn(2+) site is built by Gln284, Glu298, and Asn300. The segment at 402–546 (IGVHHLELNE…YSTYEEENES (145 aa)) is oligomerization domain. Positions 547–929 (IVTEKPSVIV…ALYKGLVASG (383 aa)) are carbamoyl phosphate synthetic domain. The region spanning 671–861 (EQALSELGIP…MANLATKAIL (191 aa)) is the ATP-grasp 2 domain. Residues Arg707, Arg746, Ile748, Glu752, Gly777, Val778, His779, Ser780, Gln820, and Glu832 each coordinate ATP. 3 residues coordinate Mg(2+): Gln820, Glu832, and Asn834. Residues Gln820, Glu832, and Asn834 each contribute to the Mn(2+) site. The MGS-like domain maps to 930-1065 (IHIQPHGAVL…TAMTEGLVRS (136 aa)). The segment at 930–1065 (IHIQPHGAVL…TAMTEGLVRS (136 aa)) is allosteric domain.

It belongs to the CarB family. Composed of two chains; the small (or glutamine) chain promotes the hydrolysis of glutamine to ammonia, which is used by the large (or ammonia) chain to synthesize carbamoyl phosphate. Tetramer of heterodimers (alpha,beta)4. Requires Mg(2+) as cofactor. It depends on Mn(2+) as a cofactor.

The catalysed reaction is hydrogencarbonate + L-glutamine + 2 ATP + H2O = carbamoyl phosphate + L-glutamate + 2 ADP + phosphate + 2 H(+). It carries out the reaction hydrogencarbonate + NH4(+) + 2 ATP = carbamoyl phosphate + 2 ADP + phosphate + 2 H(+). It functions in the pathway amino-acid biosynthesis; L-arginine biosynthesis; carbamoyl phosphate from bicarbonate: step 1/1. Its pathway is pyrimidine metabolism; UMP biosynthesis via de novo pathway; (S)-dihydroorotate from bicarbonate: step 1/3. In terms of biological role, large subunit of the glutamine-dependent carbamoyl phosphate synthetase (CPSase). CPSase catalyzes the formation of carbamoyl phosphate from the ammonia moiety of glutamine, carbonate, and phosphate donated by ATP, constituting the first step of 2 biosynthetic pathways, one leading to arginine and/or urea and the other to pyrimidine nucleotides. The large subunit (synthetase) binds the substrates ammonia (free or transferred from glutamine from the small subunit), hydrogencarbonate and ATP and carries out an ATP-coupled ligase reaction, activating hydrogencarbonate by forming carboxy phosphate which reacts with ammonia to form carbamoyl phosphate. The protein is Carbamoyl phosphate synthase large chain of Bacillus caldolyticus.